We begin with the raw amino-acid sequence, 339 residues long: Ketol-acid reductoisomerase (NADP(+)) (339 aa).

A KARI N-terminal Rossmann domain is found at 1-182 (MRVYYDCDVN…GGGRSGIMKT (182 aa)). Residues 24 to 27 (YGAQ), Ser51, Thr53, and 83 to 86 (DELQ) each bind NADP(+). His108 is a catalytic residue. Gly134 is a binding site for NADP(+). One can recognise a KARI C-terminal knotted domain in the interval 183 to 328 (TFREECETDL…DKIRSMMALT (146 aa)). Positions 191, 195, 227, and 231 each coordinate Mg(2+). Ser252 is a binding site for substrate.

It belongs to the ketol-acid reductoisomerase family. It depends on Mg(2+) as a cofactor.

It carries out the reaction (2R)-2,3-dihydroxy-3-methylbutanoate + NADP(+) = (2S)-2-acetolactate + NADPH + H(+). The catalysed reaction is (2R,3R)-2,3-dihydroxy-3-methylpentanoate + NADP(+) = (S)-2-ethyl-2-hydroxy-3-oxobutanoate + NADPH + H(+). It functions in the pathway amino-acid biosynthesis; L-isoleucine biosynthesis; L-isoleucine from 2-oxobutanoate: step 2/4. The protein operates within amino-acid biosynthesis; L-valine biosynthesis; L-valine from pyruvate: step 2/4. Functionally, involved in the biosynthesis of branched-chain amino acids (BCAA). Catalyzes an alkyl-migration followed by a ketol-acid reduction of (S)-2-acetolactate (S2AL) to yield (R)-2,3-dihydroxy-isovalerate. In the isomerase reaction, S2AL is rearranged via a Mg-dependent methyl migration to produce 3-hydroxy-3-methyl-2-ketobutyrate (HMKB). In the reductase reaction, this 2-ketoacid undergoes a metal-dependent reduction by NADPH to yield (R)-2,3-dihydroxy-isovalerate. The protein is Ketol-acid reductoisomerase (NADP(+)) of Bartonella bacilliformis (strain ATCC 35685 / KC583 / Herrer 020/F12,63).